The sequence spans 770 residues: DEAD-box ATP-dependent RNA helicase 24 (770 aa).

The tract at residues 1–106 is disordered; it reads MSKRPKLGGF…ADSDDEDDPV (106 aa). Positions 14 to 26 are enriched in polar residues; that stretch reads RPTSYSFERSQPP. Over residues 34-43 the composition is skewed to acidic residues; that stretch reads DDPDLDDIAF. Residues 44 to 55 show a composition bias toward low complexity; it reads SDDAAAPSDAPP. The short motif at 219–247 is the Q motif element; sequence KSFADCGFPVQLMNAIAKQGYEKPTTIQC. The Helicase ATP-binding domain maps to 250 to 425; sequence LPIVLSGRDI…REILTDPIRV (176 aa). 263 to 270 lines the ATP pocket; the sequence is AKTGSGKT. Positions 373–376 match the DEAD box motif; the sequence is DEAD. Positions 436 to 599 constitute a Helicase C-terminal domain; it reads DIKQVVNVLP…DVPNELMDLA (164 aa). The span at 604–613 shows a compositional bias: basic and acidic residues; it reads RFRANRDSRK. Disordered regions lie at residues 604 to 640, 683 to 704, and 729 to 770; these read RFRA…RGRG, VSAS…PSSF, and LPAP…GWDR. Positions 621–635 are enriched in gly residues; it reads GKGGGGGGGGGSGAR. Positions 683–697 are enriched in low complexity; it reads VSASSSNTPSNSAPS. Residues 744-753 show a composition bias toward polar residues; it reads TVENANPNPE. The span at 754–770 shows a compositional bias: basic and acidic residues; it reads SSRDRTRERKRPSGWDR.

It belongs to the DEAD box helicase family.

The enzyme catalyses ATP + H2O = ADP + phosphate + H(+). The protein is DEAD-box ATP-dependent RNA helicase 24 of Oryza sativa subsp. japonica (Rice).